A 399-amino-acid chain; its full sequence is Protein DDI1 homolog 2 (399 aa).

A Ubiquitin-like domain is found at 1–81; it reads MLLTVYCVRR…VILRQKENAD (81 aa). Residues 99 to 134 are disordered; sequence IAVPGTSNPQQRQLPRTQAQHSSPGEMASSPQGLDN. The segment covering 103–131 has biased composition (polar residues); it reads GTSNPQQRQLPRTQAQHSSPGEMASSPQG. A Phosphothreonine modification is found at Thr104. Phosphoserine occurs at positions 121, 128, 150, and 194. Asp252 is a catalytic residue. The Ubiquitin-binding signature appears at 376-395; sequence EEIADQELAEAIQKSAEDAE.

It belongs to the DDI1 family. Homodimer.

It is found in the cytoplasm. The protein localises to the cytosol. The protein resides in the chromosome. Its function is as follows. Aspartic protease that mediates the cleavage of NFE2L1/NRF1 at 'Leu-104', thereby promoting release of NFE2L1/NRF1 from the endoplasmic reticulum membrane. Ubiquitination of NFE2L1/NRF1 is a prerequisite for cleavage, suggesting that DDI2 specifically recognizes and binds ubiquitinated NFE2L1/NRF1. Seems to act as a proteasomal shuttle which links the proteasome and replication fork proteins like RTF2. Required, with DDI1, for cellular survival following replication stress. Together or redudantly with DDI1, removes RTF2 from stalled forks to allow cell cycle progression after replication stress and maintains genome integrity. The protein is Protein DDI1 homolog 2 of Mus musculus (Mouse).